We begin with the raw amino-acid sequence, 258 residues long: Hydroxyacylglutathione hydrolase (258 aa).

7 residues coordinate Zn(2+): His56, His58, Asp60, His61, His112, Asp132, and His170.

Belongs to the metallo-beta-lactamase superfamily. Glyoxalase II family. As to quaternary structure, monomer. Zn(2+) is required as a cofactor.

It catalyses the reaction an S-(2-hydroxyacyl)glutathione + H2O = a 2-hydroxy carboxylate + glutathione + H(+). It functions in the pathway secondary metabolite metabolism; methylglyoxal degradation; (R)-lactate from methylglyoxal: step 2/2. Functionally, thiolesterase that catalyzes the hydrolysis of S-D-lactoyl-glutathione to form glutathione and D-lactic acid. The polypeptide is Hydroxyacylglutathione hydrolase (Pseudomonas paraeruginosa (strain DSM 24068 / PA7) (Pseudomonas aeruginosa (strain PA7))).